The primary structure comprises 472 residues: Uronate isomerase (472 aa).

It belongs to the metallo-dependent hydrolases superfamily. Uronate isomerase family.

It carries out the reaction D-glucuronate = D-fructuronate. It catalyses the reaction aldehydo-D-galacturonate = keto-D-tagaturonate. The protein operates within carbohydrate metabolism; pentose and glucuronate interconversion. The chain is Uronate isomerase from Lactococcus lactis subsp. cremoris (strain MG1363).